The following is a 329-amino-acid chain: Beta-ketoacyl-[acyl-carrier-protein] synthase III (329 aa).

Residues Cys-113 and His-256 contribute to the active site. The interval 257–261 (QANQR) is ACP-binding. Residue Asn-286 is part of the active site.

Belongs to the thiolase-like superfamily. FabH family. As to quaternary structure, homodimer.

It localises to the cytoplasm. It carries out the reaction malonyl-[ACP] + acetyl-CoA + H(+) = 3-oxobutanoyl-[ACP] + CO2 + CoA. Its pathway is lipid metabolism; fatty acid biosynthesis. Catalyzes the condensation reaction of fatty acid synthesis by the addition to an acyl acceptor of two carbons from malonyl-ACP. Catalyzes the first condensation reaction which initiates fatty acid synthesis and may therefore play a role in governing the total rate of fatty acid production. Possesses both acetoacetyl-ACP synthase and acetyl transacylase activities. Its substrate specificity determines the biosynthesis of branched-chain and/or straight-chain of fatty acids. The protein is Beta-ketoacyl-[acyl-carrier-protein] synthase III of Natranaerobius thermophilus (strain ATCC BAA-1301 / DSM 18059 / JW/NM-WN-LF).